We begin with the raw amino-acid sequence, 319 residues long: NAP1-binding protein (319 aa).

Over residues 34–43 (SALRSRRKQM) the composition is skewed to basic residues. Positions 34–74 (SALRSRRKQMRPTGKSVLKRPRKVTDRKTEEKIRTNRRKTP) are disordered. The segment covering 56-67 (KVTDRKTEEKIR) has biased composition (basic and acidic residues). Phosphoserine occurs at positions 251 and 260. The interval 278–319 (EMQPLQENISPACPTPPYRSRETEKEDETLSPISVDFSSYLS) is disordered.

In terms of assembly, interacts with NDC1 and MPS2.

The protein is NAP1-binding protein (NBP1) of Saccharomyces cerevisiae (strain ATCC 204508 / S288c) (Baker's yeast).